The primary structure comprises 191 residues: MCGEKSLLQEIDEVNIAMGLISLGARMQVLESETSLSRRRLLRLYKELRGCPPPKGMLPFSEDWFMSWEQNIHSSMFYNIYLYLKKTEQGRSIEMLMKTYRLYLEQCSTCSDEKPVLGLTRAWTLLRFIDCGIISRKACSVCGGGFIVTTEFIKNPFTCSLCSPPSRALKKSQVSNTGLLGTFAAPEIMTA.

Positions 139, 142, 159, and 162 each coordinate Zn(2+).

Belongs to the FlhC family. Heterohexamer composed of two FlhC and four FlhD subunits. Each FlhC binds a FlhD dimer, forming a heterotrimer, and a hexamer assembles by dimerization of two heterotrimers. The cofactor is Zn(2+).

The protein localises to the cytoplasm. Its function is as follows. Functions in complex with FlhD as a master transcriptional regulator that regulates transcription of several flagellar and non-flagellar operons by binding to their promoter region. Activates expression of class 2 flagellar genes, including fliA, which is a flagellum-specific sigma factor that turns on the class 3 genes. Also regulates genes whose products function in a variety of physiological pathways. The polypeptide is Flagellar transcriptional regulator FlhC (Enterobacter cloacae subsp. cloacae (strain ATCC 13047 / DSM 30054 / NBRC 13535 / NCTC 10005 / WDCM 00083 / NCDC 279-56)).